The primary structure comprises 57 residues: UPF0391 membrane protein RL4195 (57 aa).

2 consecutive transmembrane segments (helical) span residues 4–24 (WALI…SGVS) and 33–53 (VLFG…LMAG).

It belongs to the UPF0391 family.

The protein localises to the cell membrane. In Rhizobium johnstonii (strain DSM 114642 / LMG 32736 / 3841) (Rhizobium leguminosarum bv. viciae), this protein is UPF0391 membrane protein RL4195.